The primary structure comprises 72 residues: Beta-defensin 104A (72 aa).

A signal peptide spans 1–22 (MRRLVLLLAISLLLYQDLPVRS). Cystine bridges form between Cys30/Cys57, Cys37/Cys51, and Cys41/Cys58.

The protein belongs to the beta-defensin family.

The protein localises to the secreted. Its function is as follows. Has antimicrobial activity. The sequence is that of Beta-defensin 104A (DEFB104A) from Gorilla gorilla gorilla (Western lowland gorilla).